Reading from the N-terminus, the 854-residue chain is Probable inorganic carbon transporter subunit DabA (854 aa).

Residues Cys378, Asp380, His560, and Cys575 each coordinate Zn(2+).

It belongs to the inorganic carbon transporter (TC 9.A.2) DabA family. Forms a complex with DabB. Requires Zn(2+) as cofactor.

Its subcellular location is the cell membrane. Its function is as follows. Part of an energy-coupled inorganic carbon pump. The sequence is that of Probable inorganic carbon transporter subunit DabA from Bacillus cereus (strain ATCC 14579 / DSM 31 / CCUG 7414 / JCM 2152 / NBRC 15305 / NCIMB 9373 / NCTC 2599 / NRRL B-3711).